Consider the following 159-residue polypeptide: Urease accessory protein UreE (159 aa).

The protein belongs to the UreE family.

It is found in the cytoplasm. Its function is as follows. Involved in urease metallocenter assembly. Binds nickel. Probably functions as a nickel donor during metallocenter assembly. The sequence is that of Urease accessory protein UreE from Pseudomonas entomophila (strain L48).